Here is a 388-residue protein sequence, read N- to C-terminus: L-lactate dehydrogenase (388 aa).

Positions 1 to 380 (MIISAASDYR…SADALSRVTR (380 aa)) constitute an FMN hydroxy acid dehydrogenase domain. Tyr-24 is a binding site for substrate. Residues Ser-106 and Gln-127 each contribute to the FMN site. Substrate is bound at residue Tyr-129. Position 155 (Thr-155) interacts with FMN. Substrate is bound at residue Arg-164. Lys-251 contributes to the FMN binding site. His-275 acts as the Proton acceptor in catalysis. Residue Arg-278 coordinates substrate. 306-330 (DSGIRSGLDVVRMLALGADAVLLGR) contacts FMN.

The protein belongs to the FMN-dependent alpha-hydroxy acid dehydrogenase family. The cofactor is FMN.

It localises to the cell inner membrane. It catalyses the reaction (S)-lactate + A = pyruvate + AH2. Its function is as follows. Catalyzes the conversion of L-lactate to pyruvate. Is coupled to the respiratory chain. In Xanthomonas axonopodis pv. citri (strain 306), this protein is L-lactate dehydrogenase.